A 216-amino-acid polypeptide reads, in one-letter code: Trimethylamine corrinoid protein 1 (216 aa).

The 92-residue stretch at 1 to 92 (MASKEEIIAK…EMEKRKSETK (92 aa)) folds into the B12-binding N-terminal domain. The 123-residue stretch at 94–216 (LGTVVIGTIE…VVSKVRAVLL (123 aa)) folds into the B12-binding domain. Residue histidine 107 coordinates methylcob(III)alamin.

This sequence belongs to the methylamine corrinoid protein family. In terms of assembly, can form a complex with MttB.

It participates in one-carbon metabolism; methanogenesis from trimethylamine. In terms of biological role, acts probably as a methyl group carrier between MttB and either MtbA or MtaA. This Methanosarcina acetivorans (strain ATCC 35395 / DSM 2834 / JCM 12185 / C2A) protein is Trimethylamine corrinoid protein 1 (mttC1).